Consider the following 221-residue polypeptide: NADH-ubiquinone oxidoreductase chain 6 (221 aa).

A run of 5 helical transmembrane segments spans residues 18–38, 44–64, 74–94, 107–127, and 195–215; these read FVEY…IYVI, IVSV…LNII, IIVY…LINI, IPLT…MLPY, and IWLI…IVIT.

The protein belongs to the complex I subunit 6 family.

Its subcellular location is the mitochondrion membrane. It carries out the reaction a ubiquinone + NADH + 5 H(+)(in) = a ubiquinol + NAD(+) + 4 H(+)(out). Core subunit of the mitochondrial membrane respiratory chain NADH dehydrogenase (Complex I) that is believed to belong to the minimal assembly required for catalysis. Complex I functions in the transfer of electrons from NADH to the respiratory chain. The immediate electron acceptor for the enzyme is believed to be ubiquinone. This chain is NADH-ubiquinone oxidoreductase chain 6 (ND6), found in Podospora anserina (strain S / ATCC MYA-4624 / DSM 980 / FGSC 10383) (Pleurage anserina).